A 404-amino-acid polypeptide reads, in one-letter code: Tryptophan synthase beta chain (404 aa).

Lys98 is subject to N6-(pyridoxal phosphate)lysine.

The protein belongs to the TrpB family. In terms of assembly, tetramer of two alpha and two beta chains. Pyridoxal 5'-phosphate is required as a cofactor.

It carries out the reaction (1S,2R)-1-C-(indol-3-yl)glycerol 3-phosphate + L-serine = D-glyceraldehyde 3-phosphate + L-tryptophan + H2O. Its pathway is amino-acid biosynthesis; L-tryptophan biosynthesis; L-tryptophan from chorismate: step 5/5. The beta subunit is responsible for the synthesis of L-tryptophan from indole and L-serine. The chain is Tryptophan synthase beta chain from Rhodopseudomonas palustris (strain ATCC BAA-98 / CGA009).